We begin with the raw amino-acid sequence, 157 residues long: Snaclec A16 (157 aa).

An N-terminal signal peptide occupies residues 1–23 (MGRLISVSFGLLVVFLSLSGTGA). Cystine bridges form between C27–C38, C55–C149, and C124–C141. A C-type lectin domain is found at 34-150 (YEGHCYKVFN…CELAYHFICM (117 aa)).

It belongs to the snaclec family. Heterodimer; disulfide-linked. In terms of tissue distribution, expressed by the venom gland.

The protein resides in the secreted. Functionally, interferes with one step of hemostasis (modulation of platelet aggregation, or coagulation cascade, for example). This chain is Snaclec A16, found in Macrovipera lebetinus (Levantine viper).